Consider the following 124-residue polypeptide: Late histone H2B.2.1 (124 aa).

Residues 1 to 32 (MPAKQTSGKGAKKAGKAKGRPAGASKTRRRKR) form a disordered region. Residues 10-19 (GAKKAGKAKG) are compositionally biased toward basic residues. O-linked (GlcNAc) serine glycosylation is present at S111. K119 is covalently cross-linked (Glycyl lysine isopeptide (Lys-Gly) (interchain with G-Cter in ubiquitin)).

This sequence belongs to the histone H2B family. In terms of assembly, the nucleosome is a histone octamer containing two molecules each of H2A, H2B, H3 and H4 assembled in one H3-H4 heterotetramer and two H2A-H2B heterodimers. The octamer wraps approximately 147 bp of DNA. Post-translationally, monoubiquitination of Lys-119 gives a specific tag for epigenetic transcriptional activation and is also prerequisite for histone H3 'Lys-4' and 'Lys-79' methylation. In terms of processing, glcNAcylation at Ser-111 promotes monoubiquitination of Lys-119. It fluctuates in response to extracellular glucose, and associates with transcribed genes.

Its subcellular location is the nucleus. The protein localises to the chromosome. In terms of biological role, core component of nucleosome. Nucleosomes wrap and compact DNA into chromatin, limiting DNA accessibility to the cellular machineries which require DNA as a template. Histones thereby play a central role in transcription regulation, DNA repair, DNA replication and chromosomal stability. DNA accessibility is regulated via a complex set of post-translational modifications of histones, also called histone code, and nucleosome remodeling. This Psammechinus miliaris (Green sea urchin) protein is Late histone H2B.2.1.